Here is a 940-residue protein sequence, read N- to C-terminus: Translation initiation factor IF-2 (940 aa).

2 stretches are compositionally biased toward low complexity: residues 138 to 147 (APVEVVAEPE) and 161 to 208 (PVVV…ITEL). Positions 138-354 (APVEVVAEPE…DRQTFQAPTE (217 aa)) are disordered. 2 stretches are compositionally biased toward basic and acidic residues: residues 214–271 (IAAR…EEAA) and 289–311 (AKADDKAGKDAKRGPAREADGAK). One can recognise a tr-type G domain in the interval 440 to 609 (PRAPVVTVMG…LLQAEVLELT (170 aa)). The tract at residues 449 to 456 (GHVDHGKT) is G1. 449-456 (GHVDHGKT) contributes to the GTP binding site. Positions 474 to 478 (GITQH) are G2. Residues 495–498 (DTPG) are G3. GTP-binding positions include 495-499 (DTPGH) and 549-552 (TKID). Residues 549–552 (TKID) form a G4 region. The segment at 585-587 (SAK) is G5.

The protein belongs to the TRAFAC class translation factor GTPase superfamily. Classic translation factor GTPase family. IF-2 subfamily.

It localises to the cytoplasm. One of the essential components for the initiation of protein synthesis. Protects formylmethionyl-tRNA from spontaneous hydrolysis and promotes its binding to the 30S ribosomal subunits. Also involved in the hydrolysis of GTP during the formation of the 70S ribosomal complex. The sequence is that of Translation initiation factor IF-2 from Azoarcus sp. (strain BH72).